We begin with the raw amino-acid sequence, 62 residues long: Photosystem II reaction center protein Z (62 aa).

2 helical membrane passes run 8–28 (TLFA…VVFA) and 41–61 (FSGI…NSFV).

This sequence belongs to the PsbZ family. As to quaternary structure, PSII is composed of 1 copy each of membrane proteins PsbA, PsbB, PsbC, PsbD, PsbE, PsbF, PsbH, PsbI, PsbJ, PsbK, PsbL, PsbM, PsbT, PsbY, PsbZ, Psb30/Ycf12, at least 3 peripheral proteins of the oxygen-evolving complex and a large number of cofactors. It forms dimeric complexes.

The protein resides in the plastid. Its subcellular location is the chloroplast thylakoid membrane. May control the interaction of photosystem II (PSII) cores with the light-harvesting antenna, regulates electron flow through the 2 photosystem reaction centers. PSII is a light-driven water plastoquinone oxidoreductase, using light energy to abstract electrons from H(2)O, generating a proton gradient subsequently used for ATP formation. The protein is Photosystem II reaction center protein Z of Tupiella akineta (Green alga).